The following is a 715-amino-acid chain: Phosphoribosylformylglycinamidine synthase subunit PurL (715 aa).

His33 is an active-site residue. Position 36 (Tyr36) interacts with ATP. Residue Glu77 participates in Mg(2+) binding. Substrate is bound by residues 78 to 81 (SHNH) and Arg100. The active-site Proton acceptor is His79. Position 101 (Asp101) interacts with Mg(2+). A substrate-binding site is contributed by Gln225. Residue Asp253 coordinates Mg(2+). 297 to 299 (ESQ) contacts substrate. Positions 476 and 513 each coordinate ATP. Asn514 contacts Mg(2+). Ser516 is a substrate binding site.

It belongs to the FGAMS family. As to quaternary structure, monomer. Part of the FGAM synthase complex composed of 1 PurL, 1 PurQ and 2 PurS subunits.

It localises to the cytoplasm. The enzyme catalyses N(2)-formyl-N(1)-(5-phospho-beta-D-ribosyl)glycinamide + L-glutamine + ATP + H2O = 2-formamido-N(1)-(5-O-phospho-beta-D-ribosyl)acetamidine + L-glutamate + ADP + phosphate + H(+). The protein operates within purine metabolism; IMP biosynthesis via de novo pathway; 5-amino-1-(5-phospho-D-ribosyl)imidazole from N(2)-formyl-N(1)-(5-phospho-D-ribosyl)glycinamide: step 1/2. Its function is as follows. Part of the phosphoribosylformylglycinamidine synthase complex involved in the purines biosynthetic pathway. Catalyzes the ATP-dependent conversion of formylglycinamide ribonucleotide (FGAR) and glutamine to yield formylglycinamidine ribonucleotide (FGAM) and glutamate. The FGAM synthase complex is composed of three subunits. PurQ produces an ammonia molecule by converting glutamine to glutamate. PurL transfers the ammonia molecule to FGAR to form FGAM in an ATP-dependent manner. PurS interacts with PurQ and PurL and is thought to assist in the transfer of the ammonia molecule from PurQ to PurL. In Methanosarcina barkeri (strain Fusaro / DSM 804), this protein is Phosphoribosylformylglycinamidine synthase subunit PurL.